Here is a 153-residue protein sequence, read N- to C-terminus: MAPKAEKKPAAKKPAEEEPAAEKAEKALAGKKPKAEKRLPAGKAEKGSGEGRKAGRKKAKKSVETYKIYIFKVLKQVHPDIGISSKAMSIMNSFINDIFEKLAGESAKLARYNKKPTITSREIQTSVRLVLPGELAKHAVSEGTKAVTKFTSA.

Basic and acidic residues-rich tracts occupy residues 1–28 (MAPK…EKAL) and 36–53 (EKRL…EGRK). The disordered stretch occupies residues 1–61 (MAPKAEKKPA…RKAGRKKAKK (61 aa)). N6-acetyllysine occurs at positions 7 and 37. Lys-149 participates in a covalent cross-link: Glycyl lysine isopeptide (Lys-Gly) (interchain with G-Cter in ubiquitin).

Belongs to the histone H2B family. The nucleosome is a histone octamer containing two molecules each of H2A, H2B, H3 and H4 assembled in one H3-H4 heterotetramer and two H2A-H2B heterodimers. The octamer wraps approximately 147 bp of DNA. Can be acetylated to form H2BK6ac and H2BK33ac. Post-translationally, monoubiquitinated by BRE1 to form H2BK143ub1 and deubiquitinated by UBP26. Required for heterochromatic histone H3 di- and trimethylation at H3K4me. May give a specific tag for epigenetic transcriptional activation.

Its subcellular location is the nucleus. It localises to the chromosome. Core component of nucleosome. Nucleosomes wrap and compact DNA into chromatin, limiting DNA accessibility to the cellular machineries which require DNA as a template. Histones thereby play a central role in transcription regulation, DNA repair, DNA replication and chromosomal stability. DNA accessibility is regulated via a complex set of post-translational modifications of histones, also called histone code, and nucleosome remodeling. This Oryza sativa subsp. indica (Rice) protein is Histone H2B.3 (H2B.3).